A 77-amino-acid chain; its full sequence is Cysteine-rich protein 1 (77 aa).

The LIM zinc-binding domain maps to 2-63 (PKCPKCDKEV…HPCYSAMFGP (62 aa)). Residues K9 and K22 each carry the N6-acetyllysine modification. The residue at position 68 (R68) is an Omega-N-methylarginine.

Its function is as follows. Seems to have a role in zinc absorption and may function as an intracellular zinc transport protein. The chain is Cysteine-rich protein 1 (Crip1) from Mus musculus (Mouse).